The following is a 180-amino-acid chain: Ribulose bisphosphate carboxylase small subunit, chloroplastic 2 (180 aa).

The N-terminal 54 residues, 1-54, are a transit peptide targeting the chloroplast; it reads MASMMSNAAVVGRTTPAQASMVAPFTGLKSVSAFPVTKKSNDITSIASNGGRVQ.

It belongs to the RuBisCO small chain family. Heterohexadecamer of 8 large and 8 small subunits.

Its subcellular location is the plastid. It localises to the chloroplast. In terms of biological role, ruBisCO catalyzes two reactions: the carboxylation of D-ribulose 1,5-bisphosphate, the primary event in carbon dioxide fixation, as well as the oxidative fragmentation of the pentose substrate. Both reactions occur simultaneously and in competition at the same active site. Although the small subunit is not catalytic it is essential for maximal activity. The sequence is that of Ribulose bisphosphate carboxylase small subunit, chloroplastic 2 from Mesembryanthemum crystallinum (Common ice plant).